A 66-amino-acid polypeptide reads, in one-letter code: Large ribosomal subunit protein bL35 (66 aa).

The protein belongs to the bacterial ribosomal protein bL35 family.

This Caulobacter vibrioides (strain ATCC 19089 / CIP 103742 / CB 15) (Caulobacter crescentus) protein is Large ribosomal subunit protein bL35.